Reading from the N-terminus, the 257-residue chain is uncharacterized protein (257 aa).

A helical membrane pass occupies residues 6-26; the sequence is IFWLNLAAIIIISIVVSGDMF.

It belongs to the staphylococcal tandem lipoprotein family.

The protein resides in the cell membrane. This is an uncharacterized protein from Staphylococcus aureus (strain NCTC 8325 / PS 47).